Here is a 152-residue protein sequence, read N- to C-terminus: uncharacterized protein (152 aa).

The next 4 helical transmembrane spans lie at 2–22, 26–46, 92–112, and 128–148; these read ENLIVAISNFPAVLPIGLSFL, FITFGTITFVSIASFISHLIE, VVPIVNNKWLFAMTIPVFILL, and YIITHCMWHAGIFGLMYYFLK.

The protein localises to the membrane. This is an uncharacterized protein from Acanthamoeba polyphaga mimivirus (APMV).